Consider the following 1133-residue polypeptide: Lysylphosphatidylglycerol biosynthesis bifunctional protein LysX (1133 aa).

The tract at residues 1-626 (MTTVDASPGI…LLHHDGSTPD (626 aa)) is phosphatidylglycerol lysyltransferase. 7 helical membrane passes run 43-63 (VPAAAGWTVGVIATLSLIASV), 82-102 (LFNFPDTSIAWSFVLALLAAA), 109-129 (IAWLLLLGNMVLAAVLNAVDM), 140-160 (FGENLGFAVHVVAILLLVLSY), 177-197 (AVLVAGDVIGILLSLGLVELF), 233-253 (LNAIFGLFGALALIMATIVLF), and 575-595 (LIPRVGVASVIAEGFLVLPFS). The tract at residues 627-1133 (VSGLQTADVD…TLPFPLAKPH (507 aa)) is lysine--tRNA ligase. Mg(2+)-binding residues include aspartate 1045 and glutamate 1052.

It in the N-terminal section; belongs to the LPG synthetase family. In the C-terminal section; belongs to the class-II aminoacyl-tRNA synthetase family. The cofactor is Mg(2+).

It is found in the cell membrane. The catalysed reaction is tRNA(Lys) + L-lysine + ATP = L-lysyl-tRNA(Lys) + AMP + diphosphate. It carries out the reaction L-lysyl-tRNA(Lys) + a 1,2-diacyl-sn-glycero-3-phospho-(1'-sn-glycerol) = a 1,2-diacyl-sn-glycero-3-phospho-1'-(3'-O-L-lysyl)-sn-glycerol + tRNA(Lys). In terms of biological role, catalyzes the production of L-lysyl-tRNA(Lys)transfer and the transfer of a lysyl group from L-lysyl-tRNA(Lys) to membrane-bound phosphatidylglycerol (PG), which produces lysylphosphatidylglycerol (LPG), one of the components of the bacterial membrane with a positive net charge. LPG synthesis contributes to the resistance to cationic antimicrobial peptides (CAMPs) and likely protects M.tuberculosis against the CAMPs produced by competiting microorganisms (bacteriocins). In fact, the modification of anionic phosphatidylglycerol with positively charged L-lysine results in repulsion of the peptides. In Mycobacterium leprae (strain Br4923), this protein is Lysylphosphatidylglycerol biosynthesis bifunctional protein LysX (lysX).